The sequence spans 351 residues: Beta-hexosaminidase (351 aa).

Substrate-binding positions include Asp-62, Arg-70, Arg-134, and 164-165; that span reads KH. His-177 functions as the Proton donor/acceptor in the catalytic mechanism. Residue Asp-249 is the Nucleophile of the active site.

The protein belongs to the glycosyl hydrolase 3 family. NagZ subfamily. In terms of assembly, monomer.

The protein resides in the cytoplasm. It catalyses the reaction Hydrolysis of terminal non-reducing N-acetyl-D-hexosamine residues in N-acetyl-beta-D-hexosaminides.. It functions in the pathway cell wall biogenesis; peptidoglycan recycling. Plays a role in peptidoglycan recycling by cleaving the terminal beta-1,4-linked N-acetylglucosamine (GlcNAc) from peptide-linked peptidoglycan fragments, giving rise to free GlcNAc, anhydro-N-acetylmuramic acid and anhydro-N-acetylmuramic acid-linked peptides. In Pasteurella multocida (strain Pm70), this protein is Beta-hexosaminidase.